A 263-amino-acid chain; its full sequence is MKKLMMIGFGAMAAEVYAHLPQDLQLKWIVVPSRSIEKVQSQVSSDIQVISDIEQCDGTPDYVIEVAGQAAVKEHAQKVLAKGWTIGLISVGTLADSEFLVQLKQTAEKNDAHLHLLAGAIAGIDGISAAKEGGLQKVTYKGCKSPKSWKGSYAEQLVDLDHVSEPTVFFTGTAREAAMKFPANANVAATIALAGLGMDETMVELTVDPTINKNKHTIVAEGGFGQMTIELVGVPLPSNPKTSTLAALSVIRACRNSVEAIQI.

Residues A120 and N186 each coordinate NAD(+). The active site involves H216.

Belongs to the L-aspartate dehydrogenase family.

The catalysed reaction is L-aspartate + NADP(+) + H2O = oxaloacetate + NH4(+) + NADPH + H(+). It carries out the reaction L-aspartate + NAD(+) + H2O = oxaloacetate + NH4(+) + NADH + H(+). It participates in cofactor biosynthesis; NAD(+) biosynthesis; iminoaspartate from L-aspartate (dehydrogenase route): step 1/1. In terms of biological role, specifically catalyzes the NAD or NADP-dependent dehydrogenation of L-aspartate to iminoaspartate. The chain is L-aspartate dehydrogenase from Acinetobacter baumannii (strain AB307-0294).